Consider the following 191-residue polypeptide: Small ribosomal subunit protein eS7y (191 aa).

Position 1 is an N-acetylmethionine (methionine 1). Positions 17 to 50 (TEFEEQVTQALFDLENTNQELKSELKDLYINQAV) form a coiled coil.

Belongs to the eukaryotic ribosomal protein eS7 family.

This chain is Small ribosomal subunit protein eS7y (RPS7B), found in Arabidopsis thaliana (Mouse-ear cress).